A 542-amino-acid polypeptide reads, in one-letter code: Protein MPA43 (542 aa).

In Saccharomyces cerevisiae (strain ATCC 204508 / S288c) (Baker's yeast), this protein is Protein MPA43 (MPA43).